A 658-amino-acid polypeptide reads, in one-letter code: Squalene--hopene cyclase (658 aa).

A PFTB 1 repeat occupies 69 to 110 (EAKIGRYLRRIQGEHGGWSLFYGGDLDLSATVKAYFALKMIG). The active-site Proton donor is the D392. PFTB repeat units follow at residues 418–459 (KARA…GALL), 486–526 (MKAA…NVAA), and 534–584 (IQKA…GLMA).

It belongs to the terpene cyclase/mutase family.

Its subcellular location is the cell membrane. It carries out the reaction squalene = hop-22(29)-ene. The enzyme catalyses squalene + H2O = hopan-22-ol. It functions in the pathway secondary metabolite biosynthesis; hopanoid biosynthesis. In terms of biological role, catalyzes the cyclization of squalene into hopene. This Zymomonas mobilis subsp. mobilis (strain ATCC 31821 / ZM4 / CP4) protein is Squalene--hopene cyclase (shc).